A 552-amino-acid chain; its full sequence is MKAKKKLGVGLSRQERQVLVIGEIIQELLKAHEAKKDVNLNRMKSLVASKYGLDSSPRLVDIIAAVPQDAKKILLPKLRAKPIRTASGIAVVAVMCKPHRCPHINMTGNICVYCPGGPDSDFEYSTQSYTGYEPTSMRAIRSRYDPFLQTRHRVEQLKQLGHSVDKVEFIVMGGTFMCLPEEYRDYFIRNLHDALSGHSSANVAEAVRYSEKSRTKCIGITIETRPDYCLKRHISDMLSYGCTRLEIGVQSVYEDVARDTNRGHTVRAVCESFQLGKDAGYKIVTHMMPDLPNVDFERDIEQFIEYFENPAFRSDGLKIYPTLVIRGTGLYELWKTGRYKSYPPSMLVDLVAKILALVPPWTRVYRVQRDIPMPLVSSGVEHGNLRELALARMKDLGTTCRDVRTREVGIQEIHNKVRPYEIELIRRDYVANGGWETFLSYEDPEQDILVGLLRLRKCSPDTFRPELKGECSIVRELHVYGSVVPVNARDPTKFQHQGFGMLLMEEAERIAREEHGSTKLAVISGVGTRNYYRKMGYQLDGPYMSKSIEENN.

The region spanning 84–374 (RTASGIAVVA…YRVQRDIPMP (291 aa)) is the Radical SAM core domain. Residues C101, C111, and C114 each coordinate [4Fe-4S] cluster. Residues K166, 476–479 (ELHV), 499–501 (FGM), and Y532 each bind acetyl-CoA. An N-acetyltransferase domain is found at 398 to 552 (TTCRDVRTRE…YMSKSIEENN (155 aa)).

Belongs to the ELP3 family. In terms of assembly, component of the elongator complex composed of Elp1, Elp2, Elp3, Elp4, Elp5 and Elp6. The elongator complex associates with and stabilizes microtubules; efficient interaction requires the full complex. [4Fe-4S] cluster serves as cofactor.

It localises to the cytoplasm. Its subcellular location is the nucleus. The protein localises to the cytoskeleton. The protein resides in the spindle. It carries out the reaction uridine(34) in tRNA + acetyl-CoA + S-adenosyl-L-methionine + H2O = 5-(carboxymethyl)uridine(34) in tRNA + 5'-deoxyadenosine + L-methionine + CoA + 2 H(+). Its pathway is tRNA modification; 5-methoxycarbonylmethyl-2-thiouridine-tRNA biosynthesis. Catalytic tRNA acetyltransferase subunit of the elongator complex, which is required for multiple tRNA modifications, including mcm5U (5-methoxycarbonylmethyl uridine), mcm5s2U (5-methoxycarbonylmethyl-2-thiouridine), and ncm5U (5-carbamoylmethyl uridine). In the elongator complex, acts as a tRNA uridine(34) acetyltransferase by mediating formation of carboxymethyluridine in the wobble base at position 34 in tRNAs. Binding by the elongator complex stabilizes microtubules and promotes their growth. This induces central spindle asymmetry, promoting polarized signaling endosome trafficking during asymmetric cell division and cell fate assignation of sensory organ precursor cells. Plays a role in the control of synaptic bouton expansion. Required for larval development. Involved in protein synthesis-dependent long-term memory formation, probably as part of the elongator complex. This Drosophila melanogaster (Fruit fly) protein is Elongator complex protein 3.